Reading from the N-terminus, the 94-residue chain is Co-chaperonin GroES (94 aa).

It belongs to the GroES chaperonin family. Heptamer of 7 subunits arranged in a ring. Interacts with the chaperonin GroEL.

The protein localises to the cytoplasm. In terms of biological role, together with the chaperonin GroEL, plays an essential role in assisting protein folding. The GroEL-GroES system forms a nano-cage that allows encapsulation of the non-native substrate proteins and provides a physical environment optimized to promote and accelerate protein folding. GroES binds to the apical surface of the GroEL ring, thereby capping the opening of the GroEL channel. This chain is Co-chaperonin GroES, found in Clostridioides difficile (strain 630) (Peptoclostridium difficile).